Reading from the N-terminus, the 37-residue chain is MKVRTSVKKICSSCKVIRRKGVIRVICTNPKHKQRQA.

The protein belongs to the bacterial ribosomal protein bL36 family.

The chain is Large ribosomal subunit protein bL36 from Leptospira interrogans serogroup Icterohaemorrhagiae serovar copenhageni (strain Fiocruz L1-130).